A 326-amino-acid chain; its full sequence is Flap endonuclease 1 (326 aa).

Residues 1-98 (MGVQFGDFIP…KTRKVRREMK (98 aa)) form an N-domain region. Mg(2+)-binding residues include Asp27, Asp80, Glu152, Glu154, Asp173, Asp175, and Asp224. The I-domain stretch occupies residues 116–245 (EAAKYAKRVS…KRAYELVRSG (130 aa)). Residues 317–325 (KQKTLDAWF) are interaction with PCNA.

Belongs to the XPG/RAD2 endonuclease family. FEN1 subfamily. As to quaternary structure, interacts with PCNA. PCNA stimulates the nuclease activity without altering cleavage specificity. The cofactor is Mg(2+).

Functionally, structure-specific nuclease with 5'-flap endonuclease and 5'-3' exonuclease activities involved in DNA replication and repair. During DNA replication, cleaves the 5'-overhanging flap structure that is generated by displacement synthesis when DNA polymerase encounters the 5'-end of a downstream Okazaki fragment. Binds the unpaired 3'-DNA end and kinks the DNA to facilitate 5' cleavage specificity. Cleaves one nucleotide into the double-stranded DNA from the junction in flap DNA, leaving a nick for ligation. Also involved in the base excision repair (BER) pathway. Acts as a genome stabilization factor that prevents flaps from equilibrating into structures that lead to duplications and deletions. Also possesses 5'-3' exonuclease activity on nicked or gapped double-stranded DNA. This Methanocaldococcus jannaschii (strain ATCC 43067 / DSM 2661 / JAL-1 / JCM 10045 / NBRC 100440) (Methanococcus jannaschii) protein is Flap endonuclease 1.